Consider the following 679-residue polypeptide: DNA-directed RNA polymerase subunit beta' (679 aa).

Residues C69, C71, C84, and C87 each contribute to the Zn(2+) site. Mg(2+) contacts are provided by D486, D488, and D490.

Belongs to the RNA polymerase beta' chain family. RpoC1 subfamily. In terms of assembly, in plastids the minimal PEP RNA polymerase catalytic core is composed of four subunits: alpha, beta, beta', and beta''. When a (nuclear-encoded) sigma factor is associated with the core the holoenzyme is formed, which can initiate transcription. Mg(2+) serves as cofactor. It depends on Zn(2+) as a cofactor.

It localises to the plastid. It is found in the chloroplast. It carries out the reaction RNA(n) + a ribonucleoside 5'-triphosphate = RNA(n+1) + diphosphate. Functionally, DNA-dependent RNA polymerase catalyzes the transcription of DNA into RNA using the four ribonucleoside triphosphates as substrates. The protein is DNA-directed RNA polymerase subunit beta' of Physcomitrium patens (Spreading-leaved earth moss).